The primary structure comprises 479 residues: MGQAATHDANNYTSINYTEIYDVIEDEKDVCAVADEPNIPCSFGISLAVPEWEAICTAIILTMIIISTVVGNILVILSVFTYKPLRIVQNFFIVSLAVADLTVAILVLPLNVAYSILGQWVFGIYVCKMWLTCDIMCCTSSILNLCAIALDRYWAITDPINYAQKRTLERVLFMIGIVWILSLVISSPPLLGWNDWPEVFEPDTPCRLTSQPGFVIFSSSGSFYIPLVIMTVVYFEIYLATKKRLRDRAKATKISTISSGRNKYETKESDPNDQDSVSSDANPNEHQGGTRLVAENEKKHRTRKLTPKKKPKRRYWSKDDKSHNKLIIPILSNENSVTDIGENLENRNTSSESNSKETHEDNMIEITEAAPVKIQKRPKQNQTNAVYQFIEEKQRISLTRERRAARTLGIIMGVFVVCWLPFFVIYLVIPFCVSCCLSNKFINFITWLGYVNSALNPLIYTIFNMDFRRAFKKLLFIKC.

Residues 1 to 57 are Extracellular-facing; that stretch reads MGQAATHDANNYTSINYTEIYDVIEDEKDVCAVADEPNIPCSFGISLAVPEWEAICT. N-linked (GlcNAc...) asparagine glycans are attached at residues Asn-11 and Asn-16. A helical transmembrane segment spans residues 58 to 80; the sequence is AIILTMIIISTVVGNILVILSVF. Residues 81–90 lie on the Cytoplasmic side of the membrane; that stretch reads TYKPLRIVQN. The chain crosses the membrane as a helical span at residues 91 to 112; sequence FFIVSLAVADLTVAILVLPLNV. Topologically, residues 113–129 are extracellular; that stretch reads AYSILGQWVFGIYVCKM. Residues 130–150 traverse the membrane as a helical segment; the sequence is WLTCDIMCCTSSILNLCAIAL. Topologically, residues 151–170 are cytoplasmic; that stretch reads DRYWAITDPINYAQKRTLER. The chain crosses the membrane as a helical span at residues 171–193; sequence VLFMIGIVWILSLVISSPPLLGW. The Extracellular portion of the chain corresponds to 194 to 218; sequence NDWPEVFEPDTPCRLTSQPGFVIFS. A helical transmembrane segment spans residues 219–240; sequence SSGSFYIPLVIMTVVYFEIYLA. Residues 241 to 407 lie on the Cytoplasmic side of the membrane; it reads TKKRLRDRAK…LTRERRAART (167 aa). The disordered stretch occupies residues 260 to 319; sequence GRNKYETKESDPNDQDSVSSDANPNEHQGGTRLVAENEKKHRTRKLTPKKKPKRRYWSKD. Over residues 274–287 the composition is skewed to polar residues; that stretch reads QDSVSSDANPNEHQ. Basic residues predominate over residues 299–315; sequence KHRTRKLTPKKKPKRRY. The helical transmembrane segment at 408–429 threads the bilayer; sequence LGIIMGVFVVCWLPFFVIYLVI. Over 430-441 the chain is Extracellular; it reads PFCVSCCLSNKF. The helical transmembrane segment at 442-462 threads the bilayer; that stretch reads INFITWLGYVNSALNPLIYTI. The Cytoplasmic segment spans residues 463–479; it reads FNMDFRRAFKKLLFIKC.

Belongs to the G-protein coupled receptor 1 family.

It is found in the cell membrane. Its function is as follows. Receptor for octopamine. Octopamine (OA) is a neurotransmitter, neurohormone, and neuromodulator in invertebrates. The activity of this receptor is mediated by G proteins which activate adenylyl cyclase. The chain is Octopamine receptor from Bombyx mori (Silk moth).